Consider the following 103-residue polypeptide: Small ribosomal subunit protein uS10 (103 aa).

This sequence belongs to the universal ribosomal protein uS10 family. As to quaternary structure, part of the 30S ribosomal subunit.

Functionally, involved in the binding of tRNA to the ribosomes. This chain is Small ribosomal subunit protein uS10, found in Acinetobacter baumannii (strain AB307-0294).